A 1305-amino-acid chain; its full sequence is Adenylate cyclase type 9 (1305 aa).

Topologically, residues 1-110 (MASPVNQQLL…CFPQTQRRFR (110 aa)) are cytoplasmic. Low complexity predominate over residues 46-55 (ISSSCSSGES). Residues 46–71 (ISSSCSSGESGVKKTGGSGGARRQKK) form a disordered region. A helical transmembrane segment spans residues 111–131 (YALMYLSVAGLLWSIYFSVHM). The Extracellular portion of the chain corresponds to 132–134 (KTK). Residues 135-155 (LVSHLVPTLCFLIVCLGFFFF) traverse the membrane as a helical segment. Residues 156-164 (TFTKSYARH) lie on the Cytoplasmic side of the membrane. The chain crosses the membrane as a helical span at residues 165–185 (CTAISLLVTLLVFTLTLASQF). Topologically, residues 186–209 (QVLNPGLGSDSLSNLTSFSATGSS) are extracellular. N-linked (GlcNAc...) asparagine glycosylation is present at Asn199. A helical membrane pass occupies residues 210 to 229 (SCLSQVGSFSICVEVLLLLY). The Cytoplasmic segment spans residues 230–235 (TVMHLP). The chain crosses the membrane as a helical span at residues 236-253 (LYLSACLGVAYSILFETF). Topologically, residues 254 to 274 (GYHFRDESCFVLLVGRMAHWE) are extracellular. The helical transmembrane segment at 275 to 295 (LLSKALLHVCIHAIGVHLFIM) threads the bilayer. Residues 296–778 (SEVRSRSTFL…VKTFASATFS (483 aa)) are Cytoplasmic-facing. A disordered region spans residues 343-369 (QGDDESENSVKRHSASSPKSRKKKSSI). Positions 353 to 368 (KRHSASSPKSRKKKSS) are enriched in basic residues. Residues Asp393, Ile394, and Asp437 each contribute to the Mg(2+) site. ATP contacts are provided by residues 393–398 (DIVGFT), 435–437 (LGD), and Arg481. Composition is skewed to polar residues over residues 607–618 (SDSHTNCTQPET) and 670–680 (ESSTGDTLTNS). Residues 607-680 (SDSHTNCTQP…SSTGDTLTNS (74 aa)) form a disordered region. A helical membrane pass occupies residues 779–799 (SLQDVLLNYFIFVLLSVACLL). Residues 800 to 810 (KPGTNTVSPPT) are Extracellular-facing. Residues 811–831 (LALVLLSVCGLLGFLSLLVSV) form a helical membrane-spanning segment. Over 832 to 859 (RMAFYLEDMLLCTRRLLEIISGWVPRHF) the chain is Cytoplasmic. The helical transmembrane segment at 860–880 (IGTVLVCLPAAVIFSYLSSDF) threads the bilayer. The Extracellular segment spans residues 881–883 (YTD). Residues 884-904 (IHYTMFLCSALLIPMVQYCNF) form a helical membrane-spanning segment. Residues 905–911 (CQLSSSA) lie on the Cytoplasmic side of the membrane. Residues 912–932 (LLLATITGATMLILIYLPLCP) form a helical membrane-spanning segment. Residues 933-966 (QRPPLDPGTDIEANLSTSNSSYETLDNPRTELPF) are Extracellular-facing. N-linked (GlcNAc...) asparagine glycosylation is found at Asn946 and Asn951. A helical membrane pass occupies residues 967–987 (TRLGQEIAVAYFLLLLLVWFL). Topologically, residues 988-1305 (NREFDVSYRL…EERGRDGGAR (318 aa)) are cytoplasmic. ATP-binding positions include Lys1099, 1176-1178 (DIW), 1183-1187 (NIASR), and Lys1223. Residues 1261-1305 (SIGRSPTDEISSLVTGGKGAVELGSGEAERKREKAEERGRDGGAR) form a disordered region. Residues 1287 to 1305 (EAERKREKAEERGRDGGAR) show a composition bias toward basic and acidic residues.

The protein belongs to the adenylyl cyclase class-4/guanylyl cyclase family. Mg(2+) is required as a cofactor. Mn(2+) serves as cofactor. Detected in oocytes.

Its subcellular location is the cell membrane. The catalysed reaction is ATP = 3',5'-cyclic AMP + diphosphate. Adenylyl cyclase that catalyzes the formation of the signaling molecule cAMP in response to activation of G protein-coupled receptors. The polypeptide is Adenylate cyclase type 9 (adcy9) (Xenopus laevis (African clawed frog)).